A 449-amino-acid polypeptide reads, in one-letter code: UDP-N-acetylmuramoylalanine--D-glutamate ligase (449 aa).

119–125 contributes to the ATP binding site; sequence GTNGKTT.

It belongs to the MurCDEF family.

It is found in the cytoplasm. The enzyme catalyses UDP-N-acetyl-alpha-D-muramoyl-L-alanine + D-glutamate + ATP = UDP-N-acetyl-alpha-D-muramoyl-L-alanyl-D-glutamate + ADP + phosphate + H(+). It participates in cell wall biogenesis; peptidoglycan biosynthesis. Cell wall formation. Catalyzes the addition of glutamate to the nucleotide precursor UDP-N-acetylmuramoyl-L-alanine (UMA). This is UDP-N-acetylmuramoylalanine--D-glutamate ligase from Lactococcus lactis subsp. cremoris (strain SK11).